A 178-amino-acid polypeptide reads, in one-letter code: uncharacterized protein (178 aa).

A signal peptide spans Met-1–Ala-19.

The protein belongs to the opacity porin family.

This is an uncharacterized protein from Haemophilus influenzae (strain ATCC 51907 / DSM 11121 / KW20 / Rd).